The chain runs to 54 residues: Glutathione S-transferase 6.7 (54 aa).

Belongs to the GST superfamily. Theta family. As to quaternary structure, homodimer. Post-translationally, the N-terminus is blocked.

The protein resides in the cytoplasm. The enzyme catalyses RX + glutathione = an S-substituted glutathione + a halide anion + H(+). Its function is as follows. Conjugation of reduced glutathione to a wide number of exogenous and endogenous hydrophobic electrophiles. The chain is Glutathione S-transferase 6.7 from Dicentrarchus labrax (European seabass).